We begin with the raw amino-acid sequence, 286 residues long: Energy-coupling factor transporter ATP-binding protein EcfA2 (286 aa).

The region spanning 3–244 (IKVENVSFIY…AERLEKIGLS (242 aa)) is the ABC transporter domain. 40–47 (GHTGSGKS) contacts ATP.

It belongs to the ABC transporter superfamily. Energy-coupling factor EcfA family. Forms a stable energy-coupling factor (ECF) transporter complex composed of 2 membrane-embedded substrate-binding proteins (S component), 2 ATP-binding proteins (A component) and 2 transmembrane proteins (T component).

It localises to the cell membrane. Its function is as follows. ATP-binding (A) component of a common energy-coupling factor (ECF) ABC-transporter complex. Unlike classic ABC transporters this ECF transporter provides the energy necessary to transport a number of different substrates. This is Energy-coupling factor transporter ATP-binding protein EcfA2 from Caldanaerobacter subterraneus subsp. tengcongensis (strain DSM 15242 / JCM 11007 / NBRC 100824 / MB4) (Thermoanaerobacter tengcongensis).